The sequence spans 105 residues: uncharacterized protein (105 aa).

This is an uncharacterized protein from Orgyia pseudotsugata multicapsid polyhedrosis virus (OpMNPV).